The primary structure comprises 617 residues: Vacuolar protein sorting-associated protein 33B (617 aa).

At Ala-2 the chain carries N-acetylalanine.

This sequence belongs to the STXBP/unc-18/SEC1 family. Interacts with RAB11A and VIPAS39. Associates with adaptor protein complex 3 (AP-3), clathrin:AP-3 and clathrin:HGS complexes. Phosphorylated on tyrosine residues. Ubiquitous.

Its subcellular location is the late endosome membrane. It is found in the lysosome membrane. The protein localises to the early endosome. The protein resides in the cytoplasmic vesicle. It localises to the clathrin-coated vesicle. Its subcellular location is the recycling endosome. May play a role in vesicle-mediated protein trafficking to lysosomal compartments and in membrane docking/fusion reactions of late endosomes/lysosomes. Mediates phagolysosomal fusion in macrophages. Proposed to be involved in endosomal maturation implicating VIPAS39. In epithelial cells, the VPS33B:VIPAS39 complex may play a role in the apical recycling pathway and in the maintenance of the apical-basolateral polarity. Seems to be involved in the sorting of specific cargos from the trans-Golgi network to alpha-granule-destined multivesicular bodies (MVBs) promoting MVBs maturation in megakaryocytes. In Rattus norvegicus (Rat), this protein is Vacuolar protein sorting-associated protein 33B (Vps33b).